The sequence spans 99 residues: Protein Tat (99 aa).

Residues 1–20 (MELVDPNLDPWNHPGSQPTT) are disordered. The interaction with human CREBBP stretch occupies residues 1–24 (MELVDPNLDPWNHPGSQPTTPCTR). The interval 1-48 (MELVDPNLDPWNHPGSQPTTPCTRCYCKWCCFHCYWCFTTKGLGISYG) is transactivation. 3 residues coordinate Zn(2+): Cys22, Cys25, and Cys27. The cysteine-rich stretch occupies residues 22-37 (CTRCYCKWCCFHCYWC). An N6-acetyllysine; by host PCAF modification is found at Lys28. Positions 30, 33, 34, and 37 each coordinate Zn(2+). Residues 38–48 (FTTKGLGISYG) form a core region. A disordered region spans residues 48–99 (GRKKRRQRPRTPQSSQIHQDFVPKQPISQARGNPTGPKESKKEVESKAKTDP). Positions 49-57 (RKKRRQRPR) match the Nuclear localization signal, RNA-binding (TAR), and protein transduction motif. Residues 49 to 86 (RKKRRQRPRTPQSSQIHQDFVPKQPISQARGNPTGPKE) form an interaction with the host capping enzyme RNGTT region. N6-acetyllysine; by host EP300 and GCN5L2 is present on residues Lys50 and Lys51. Asymmetric dimethylarginine; by host PRMT6 is present on residues Arg52 and Arg53. Lys71 participates in a covalent cross-link: Glycyl lysine isopeptide (Lys-Gly) (interchain with G-Cter in ubiquitin). Over residues 85–99 (KESKKEVESKAKTDP) the composition is skewed to basic and acidic residues.

It belongs to the lentiviruses Tat family. As to quaternary structure, interacts with host CCNT1. Associates with the P-TEFb complex composed at least of Tat, P-TEFb (CDK9 and CCNT1), TAR RNA, RNA Pol II. Recruits the HATs CREBBP, TAF1/TFIID, EP300, PCAF and GCN5L2. Interacts with host KAT5/Tip60; this interaction targets the latter to degradation. Interacts with the host deacetylase SIRT1. Interacts with host capping enzyme RNGTT; this interaction stimulates RNGTT. Binds to host KDR, and to the host integrins ITGAV/ITGB3 and ITGA5/ITGB1. Interacts with host KPNB1/importin beta-1 without previous binding to KPNA1/importin alpha-1. Interacts with EIF2AK2. Interacts with host nucleosome assembly protein NAP1L1; this interaction may be required for the transport of Tat within the nucleus, since the two proteins interact at the nuclear rim. Interacts with host C1QBP/SF2P32; this interaction involves lysine-acetylated Tat. Interacts with the host chemokine receptors CCR2, CCR3 and CXCR4. Interacts with host DPP4/CD26; this interaction may trigger an anti-proliferative effect. Interacts with host LDLR. Interacts with the host extracellular matrix metalloproteinase MMP1. Interacts with host PRMT6; this interaction mediates Tat's methylation. Interacts with, and is ubiquitinated by MDM2/Hdm2. Interacts with host PSMC3 and HTATIP2. Interacts with STAB1; this interaction may overcome SATB1-mediated repression of IL2 and IL2RA (interleukin) in T cells by binding to the same domain than HDAC1. Interacts (when acetylated) with human CDK13, thereby increasing HIV-1 mRNA splicing and promoting the production of the doubly spliced HIV-1 protein Nef. Interacts with host TBP; this interaction modulates the activity of transcriptional pre-initiation complex. Interacts with host RELA. Interacts with host PLSCR1; this interaction negatively regulates Tat transactivation activity by altering its subcellular distribution. In terms of processing, asymmetrical arginine methylation by host PRMT6 seems to diminish the transactivation capacity of Tat and affects the interaction with host CCNT1. Acetylation by EP300, CREBBP, GCN5L2/GCN5 and PCAF regulates the transactivation activity of Tat. EP300-mediated acetylation of Lys-50 promotes dissociation of Tat from the TAR RNA through the competitive binding to PCAF's bromodomain. In addition, the non-acetylated Tat's N-terminus can also interact with PCAF. PCAF-mediated acetylation of Lys-28 enhances Tat's binding to CCNT1. Lys-50 is deacetylated by SIRT1. Post-translationally, polyubiquitination by host MDM2 does not target Tat to degradation, but activates its transactivation function and fosters interaction with CCNT1 and TAR RNA. In terms of processing, phosphorylated by EIF2AK2 on serine and threonine residues adjacent to the basic region important for TAR RNA binding and function. Phosphorylation of Tat by EIF2AK2 is dependent on the prior activation of EIF2AK2 by dsRNA.

It is found in the host nucleus. Its subcellular location is the host nucleolus. The protein resides in the host cytoplasm. The protein localises to the secreted. Functionally, transcriptional activator that increases RNA Pol II processivity, thereby increasing the level of full-length viral transcripts. Recognizes a hairpin structure at the 5'-LTR of the nascent viral mRNAs referred to as the transactivation responsive RNA element (TAR) and recruits the cyclin T1-CDK9 complex (P-TEFb complex) that will in turn hyperphosphorylate the RNA polymerase II to allow efficient elongation. The CDK9 component of P-TEFb and other Tat-activated kinases hyperphosphorylate the C-terminus of RNA Pol II that becomes stabilized and much more processive. Other factors such as HTATSF1/Tat-SF1, SUPT5H/SPT5, and HTATIP2 are also important for Tat's function. Besides its effect on RNA Pol II processivity, Tat induces chromatin remodeling of proviral genes by recruiting the histone acetyltransferases (HATs) CREBBP, EP300 and PCAF to the chromatin. This also contributes to the increase in proviral transcription rate, especially when the provirus integrates in transcriptionally silent region of the host genome. To ensure maximal activation of the LTR, Tat mediates nuclear translocation of NF-kappa-B by interacting with host RELA. Through its interaction with host TBP, Tat may also modulate transcription initiation. Tat can reactivate a latently infected cell by penetrating in it and transactivating its LTR promoter. In the cytoplasm, Tat is thought to act as a translational activator of HIV-1 mRNAs. Its function is as follows. Extracellular circulating Tat can be endocytosed by surrounding uninfected cells via the binding to several surface receptors such as CD26, CXCR4, heparan sulfate proteoglycans (HSPG) or LDLR. Neurons are rarely infected, but they internalize Tat via their LDLR. Through its interaction with nuclear HATs, Tat is potentially able to control the acetylation-dependent cellular gene expression. Modulates the expression of many cellular genes involved in cell survival, proliferation or in coding for cytokines or cytokine receptors. Tat plays a role in T-cell and neurons apoptosis. Tat induced neurotoxicity and apoptosis probably contribute to neuroAIDS. Circulating Tat also acts as a chemokine-like and/or growth factor-like molecule that binds to specific receptors on the surface of the cells, affecting many cellular pathways. In the vascular system, Tat binds to ITGAV/ITGB3 and ITGA5/ITGB1 integrins dimers at the surface of endothelial cells and competes with bFGF for heparin-binding sites, leading to an excess of soluble bFGF. This Homo sapiens (Human) protein is Protein Tat.